A 128-amino-acid polypeptide reads, in one-letter code: uncharacterized protein (128 aa).

2 consecutive transmembrane segments (helical) span residues 52–72 and 91–111; these read LLVI…GIFL and LFVA…VMLI.

It localises to the cell membrane. This is an uncharacterized protein from Mycoplasma pneumoniae (strain ATCC 29342 / M129 / Subtype 1) (Mycoplasmoides pneumoniae).